The primary structure comprises 333 residues: Dehydrodolichyl diphosphate synthase complex subunit DHDDS (333 aa).

The (2E,6E)-farnesyl diphosphate site is built by D34, G35, R37, R38, and R85. Isopentenyl diphosphate is bound by residues D34, G35, R37, R38, R85, R205, R211, and S213. D34 serves as a coordination point for Mg(2+).

The protein belongs to the UPP synthase family. The active dehydrodolichyl diphosphate synthase complex is a heterotetramer composed of a dimer of heterodimer of DHDDS and NUS1. Interacts with NPC2. Requires Mg(2+) as cofactor. In terms of tissue distribution, ubiquitous. Expressed at high levels in testis and kidney. Expressed in epididymis (at protein level).

It localises to the endoplasmic reticulum membrane. It catalyses the reaction n isopentenyl diphosphate + (2E,6E)-farnesyl diphosphate = a di-trans,poly-cis-polyprenyl diphosphate + n diphosphate. It functions in the pathway protein modification; protein glycosylation. It participates in lipid metabolism. Its activity is regulated as follows. Activated by phospholipids including cardiolipin, phosphatidylcholine, phosphatidylethanolamine, phosphatidylinositol and phosphatidylserine. In terms of biological role, with NUS1, forms the dehydrodolichyl diphosphate synthase (DDS) complex, an essential component of the dolichol monophosphate (Dol-P) biosynthetic machinery. Both subunits contribute to enzymatic activity, i.e. condensation of multiple copies of isopentenyl pyrophosphate (IPP) to farnesyl pyrophosphate (FPP) to produce dehydrodolichyl diphosphate (Dedol-PP), a precursor of dolichol phosphate which is utilized as a sugar carrier in protein glycosylation in the endoplasmic reticulum (ER). Synthesizes long-chain polyprenols, mostly of C95 and C100 chain length. Regulates the glycosylation and stability of nascent NPC2, thereby promoting trafficking of LDL-derived cholesterol. The sequence is that of Dehydrodolichyl diphosphate synthase complex subunit DHDDS from Homo sapiens (Human).